A 414-amino-acid chain; its full sequence is Glutamyl-tRNA reductase (414 aa).

Substrate is bound by residues 49-52, Ser108, 113-115, and Gln119; these read TCNR and EPQ. The active-site Nucleophile is Cys50. 188-193 contacts NADP(+); it reads GAGQTG.

It belongs to the glutamyl-tRNA reductase family. Homodimer.

The catalysed reaction is (S)-4-amino-5-oxopentanoate + tRNA(Glu) + NADP(+) = L-glutamyl-tRNA(Glu) + NADPH + H(+). Its pathway is porphyrin-containing compound metabolism; protoporphyrin-IX biosynthesis; 5-aminolevulinate from L-glutamyl-tRNA(Glu): step 1/2. Its function is as follows. Catalyzes the NADPH-dependent reduction of glutamyl-tRNA(Glu) to glutamate 1-semialdehyde (GSA). This chain is Glutamyl-tRNA reductase, found in Francisella tularensis subsp. novicida (strain U112).